A 463-amino-acid polypeptide reads, in one-letter code: Glutamate--tRNA ligase (463 aa).

The short motif at 10–20 is the 'HIGH' region element; the sequence is PSPTGYLHIGG. The short motif at 252–256 is the 'KMSKS' region element; that stretch reads KLSKR. Lys255 is an ATP binding site.

The protein belongs to the class-I aminoacyl-tRNA synthetase family. Glutamate--tRNA ligase type 1 subfamily. In terms of assembly, monomer.

Its subcellular location is the cytoplasm. It carries out the reaction tRNA(Glu) + L-glutamate + ATP = L-glutamyl-tRNA(Glu) + AMP + diphosphate. Its function is as follows. Catalyzes the attachment of glutamate to tRNA(Glu) in a two-step reaction: glutamate is first activated by ATP to form Glu-AMP and then transferred to the acceptor end of tRNA(Glu). In Mycoplasmopsis agalactiae (strain NCTC 10123 / CIP 59.7 / PG2) (Mycoplasma agalactiae), this protein is Glutamate--tRNA ligase.